The primary structure comprises 133 residues: Nickel-responsive regulator (133 aa).

Ni(2+) is bound by residues His76, His87, His89, and Cys95.

It belongs to the transcriptional regulatory CopG/NikR family. Homotetramer. It depends on Ni(2+) as a cofactor.

In terms of biological role, transcriptional repressor of the nikABCDE operon. Is active in the presence of excessive concentrations of intracellular nickel. The polypeptide is Nickel-responsive regulator (Shigella dysenteriae serotype 1 (strain Sd197)).